The primary structure comprises 307 residues: 1D-myo-inositol 2-acetamido-2-deoxy-alpha-D-glucopyranoside deacetylase 1 (307 aa).

Zn(2+) is bound by residues H21, D24, and H157.

This sequence belongs to the MshB deacetylase family. The cofactor is Zn(2+).

It catalyses the reaction 1D-myo-inositol 2-acetamido-2-deoxy-alpha-D-glucopyranoside + H2O = 1D-myo-inositol 2-amino-2-deoxy-alpha-D-glucopyranoside + acetate. Its function is as follows. Catalyzes the deacetylation of 1D-myo-inositol 2-acetamido-2-deoxy-alpha-D-glucopyranoside (GlcNAc-Ins) in the mycothiol biosynthesis pathway. The protein is 1D-myo-inositol 2-acetamido-2-deoxy-alpha-D-glucopyranoside deacetylase 1 of Frankia casuarinae (strain DSM 45818 / CECT 9043 / HFP020203 / CcI3).